Here is a 319-residue protein sequence, read N- to C-terminus: Annexin A5 (319 aa).

Alanine 2 carries the post-translational modification N-acetylalanine. Annexin repeat units lie at residues 13–84 (FDGR…AMMK), 85–156 (PSRL…VLLQ), 168–240 (AQVE…AVVK), and 244–315 (SIPA…LLCG). Lysine 27 participates in a covalent cross-link: Glycyl lysine isopeptide (Lys-Gly) (interchain with G-Cter in SUMO1); alternate. Lysine 27 participates in a covalent cross-link: Glycyl lysine isopeptide (Lys-Gly) (interchain with G-Cter in SUMO2); alternate. Serine 35 carries the post-translational modification Phosphoserine. N6-acetyllysine occurs at positions 68, 74, 77, 95, and 99. N6-succinyllysine is present on lysine 288. The [IL]-x-C-x-x-[DE] motif signature appears at 312–318 (LLCGGED).

The protein belongs to the annexin family. In terms of assembly, monomer. Binds ATRX and EIF5B. In terms of processing, S-nitrosylation is induced by interferon-gamma and oxidatively-modified low-densitity lipoprotein (LDL(ox)) possibly implicating the iNOS-S100A8/9 transnitrosylase complex.

This protein is an anticoagulant protein that acts as an indirect inhibitor of the thromboplastin-specific complex, which is involved in the blood coagulation cascade. The sequence is that of Annexin A5 (Anxa5) from Mus musculus (Mouse).